Reading from the N-terminus, the 509-residue chain is Light-independent protochlorophyllide reductase subunit B (509 aa).

D36 lines the [4Fe-4S] cluster pocket. D298 functions as the Proton donor in the catalytic mechanism. Position 433–434 (G433–M434) interacts with substrate.

The protein belongs to the ChlB/BchB/BchZ family. Protochlorophyllide reductase is composed of three subunits; ChlL, ChlN and ChlB. Forms a heterotetramer of two ChlB and two ChlN subunits. It depends on [4Fe-4S] cluster as a cofactor.

The protein resides in the plastid. It localises to the chloroplast. It carries out the reaction chlorophyllide a + oxidized 2[4Fe-4S]-[ferredoxin] + 2 ADP + 2 phosphate = protochlorophyllide a + reduced 2[4Fe-4S]-[ferredoxin] + 2 ATP + 2 H2O. The protein operates within porphyrin-containing compound metabolism; chlorophyll biosynthesis (light-independent). Functionally, component of the dark-operative protochlorophyllide reductase (DPOR) that uses Mg-ATP and reduced ferredoxin to reduce ring D of protochlorophyllide (Pchlide) to form chlorophyllide a (Chlide). This reaction is light-independent. The NB-protein (ChlN-ChlB) is the catalytic component of the complex. This Ephedra altissima (High-climbing jointfir) protein is Light-independent protochlorophyllide reductase subunit B.